Here is an 820-residue protein sequence, read N- to C-terminus: Crinkler effector protein 108 (820 aa).

Positions 1–17 (MVKLYCAVVGVAGSAFS) are cleaved as a signal peptide. The tract at residues 18–55 (VRVDESDTVDDLKDAIKAKKPNDFKDIDADKLELYVAK) is LQLFLAK domain. A DWL domain region spans residues 58–111 (GVWLTEADVKSGVADITGLVRLEVVRAKLFSVGLSDEVVSEVDAQEEAAGRGPV). Residues 112–117 (NVLVVV) carry the HVLVXXP motif motif. Residues 118 to 124 (PMKKRRV) carry the Host nuclear localization signal motif. The C-terminal DC effector domain stretch occupies residues 125–820 (DAGVDEERRF…MHYDDDEADL (696 aa)). 3 N-linked (GlcNAc...) asparagine glycosylation sites follow: Asn268, Asn371, and Asn703. The tract at residues 754–791 (NINTASFHELRRLEGVGDATAAKIIAERTIRRFSNLED) is hhH DNA-binding domain.

Belongs to the Crinkler effector family.

The protein resides in the secreted. It is found in the host nucleus. In terms of biological role, secreted effector that suppresses plant basal defense and promotes plant susceptibility via targeting promoters of host HSP gene and thus inhibiting their expression. CRN108 binds directly to heat shock elements (HSEs) 5'-GAAnnTTC-3' and interferes with the association of the HSE with the plant heat shock transcription factors, which initializes HSP gene expression in response to stress. This is Crinkler effector protein 108 from Phytophthora sojae (Soybean stem and root rot agent).